The primary structure comprises 177 residues: Transmembrane protein 275 (177 aa).

Residues 1-20 (MPQAKKSTETLAPAPPGRSR) form a disordered region. Transmembrane regions (helical) follow at residues 36–56 (GLCV…AAFL) and 63–83 (LVVG…CCVC). The disordered stretch occupies residues 113–177 (ESSERTAQDT…LNFPRDPAAS (65 aa)). A compositionally biased stretch (low complexity) spans 128 to 161 (SPAASAASSGRSSPGPGLFALDPPAPATAAPYLP).

The protein resides in the membrane. This is Transmembrane protein 275 from Mus musculus (Mouse).